The chain runs to 47 residues: Photosystem II reaction center protein K (47 aa).

Positions 1-10 (MAPLTLDLLA) are excised as a propeptide. A helical membrane pass occupies residues 26 to 46 (LPLIPLLFFLLVFVWQAAVGF).

It belongs to the PsbK family. As to quaternary structure, PSII is composed of 1 copy each of membrane proteins PsbA, PsbB, PsbC, PsbD, PsbE, PsbF, PsbH, PsbI, PsbJ, PsbK, PsbL, PsbM, PsbT, PsbX, PsbY, Psb30/Ycf12, peripheral proteins PsbO, CyanoQ (PsbQ), PsbU, PsbV and a large number of cofactors. It forms dimeric complexes.

The protein localises to the cellular thylakoid membrane. Its function is as follows. One of the components of the core complex of photosystem II (PSII). PSII is a light-driven water:plastoquinone oxidoreductase that uses light energy to abstract electrons from H(2)O, generating O(2) and a proton gradient subsequently used for ATP formation. It consists of a core antenna complex that captures photons, and an electron transfer chain that converts photonic excitation into a charge separation. This is Photosystem II reaction center protein K from Prochlorococcus marinus (strain SARG / CCMP1375 / SS120).